Consider the following 1741-residue polypeptide: Protein wings apart-like (1741 aa).

Disordered stretches follow at residues 68 to 100, 119 to 277, 291 to 472, 490 to 612, 675 to 810, 823 to 963, 1038 to 1068, 1112 to 1141, and 1708 to 1741; these read SPSQSPASTQDHDPNDLSVSVPEPPKPKKFFKS, CGAG…EVAA, SSTF…KPPK, KAAA…VQED, LAVL…ASVN, KAEA…QRGA, AAGKSDGDFGDSPSSNNNGSSSACSSASTLR, SAAGASAGGTGATTGGGGATGGGGPVRVDR, and TSSTTVGSGSAPSSTSATGTTRAPRVYKTYSSHR. Basic residues predominate over residues 165–174; that stretch reads RKRKSPKKKA. The span at 175–185 shows a compositional bias: low complexity; sequence ATTSASTPSTP. Threonine 258 carries the phosphothreonine modification. Residues 309–334 show a composition bias toward low complexity; it reads APSASASTSSQLPSASGSASNPPSAS. Serine 355 carries the post-translational modification Phosphoserine. The segment covering 367 to 377 has biased composition (polar residues); that stretch reads AHQNQLNQLSV. Low complexity predominate over residues 408–426; sequence AADSVDGSSAAVGGASAGD. The segment covering 438–456 has biased composition (acidic residues); that stretch reads PNEDEEEEEEEEDEEEEPP. Positions 503 to 512 are enriched in basic residues; the sequence is SRSKKHKHKQ. Composition is skewed to low complexity over residues 515 to 529 and 553 to 568; these read AAGSGAAPASGATPA and QHTPSHLHQLHQLHPQ. A compositionally biased stretch (polar residues) spans 586–604; sequence SQSSVLGSISSKGNSTPQL. Composition is skewed to low complexity over residues 796–810 and 849–859; these read NAAARANNNNLASVN and QQVTQVLQQEP. A compositionally biased stretch (acidic residues) spans 860–873; it reads VPEEQETPDAEEEQ. Over residues 880–894 the composition is skewed to basic and acidic residues; that stretch reads PHTDHREHSPDHDPD. Serine 888 is subject to Phosphoserine. 2 stretches are compositionally biased toward low complexity: residues 939-952 and 1047-1065; these read GAANAGAGGAAAAA and GDSPSSNNNGSSSACSSAS. Residues 1117 to 1136 are compositionally biased toward gly residues; that stretch reads SAGGTGATTGGGGATGGGGP. One can recognise a WAPL domain in the interval 1140–1648; sequence DRKTKDYYPV…EKYHTFMNLT (509 aa). Positions 1708–1730 are enriched in low complexity; it reads TSSTTVGSGSAPSSTSATGTTRA.

This sequence belongs to the WAPL family.

In terms of biological role, has a role in female meiotic chromosome segregation in females; proximal heterochromatin is involved in chromosome pairing during female meiosis. Is a dominant suppressor of both white and Stubble position-effect variegation (PEV), while it is a weak enhancer of brown variegation. This Drosophila melanogaster (Fruit fly) protein is Protein wings apart-like.